Reading from the N-terminus, the 293-residue chain is 4-diphosphocytidyl-2-C-methyl-D-erythritol kinase (293 aa).

Lys-10 is a catalytic residue. 96-106 (PIAAGLGGGSS) contacts ATP. The active site involves Asp-138.

The protein belongs to the GHMP kinase family. IspE subfamily.

It catalyses the reaction 4-CDP-2-C-methyl-D-erythritol + ATP = 4-CDP-2-C-methyl-D-erythritol 2-phosphate + ADP + H(+). The protein operates within isoprenoid biosynthesis; isopentenyl diphosphate biosynthesis via DXP pathway; isopentenyl diphosphate from 1-deoxy-D-xylulose 5-phosphate: step 3/6. Its function is as follows. Catalyzes the phosphorylation of the position 2 hydroxy group of 4-diphosphocytidyl-2C-methyl-D-erythritol. In Caulobacter sp. (strain K31), this protein is 4-diphosphocytidyl-2-C-methyl-D-erythritol kinase.